A 154-amino-acid polypeptide reads, in one-letter code: Probable transcription factor At4g00232 (154 aa).

The disordered stretch occupies residues 1-44; the sequence is MDKANTNRSKVCGGSGEAKLTGKKRKNVSAKQSKKDAKKENSQM.

The protein belongs to the GeBP family.

In Arabidopsis thaliana (Mouse-ear cress), this protein is Probable transcription factor At4g00232.